Consider the following 424-residue polypeptide: Elongation factor 1-alpha (424 aa).

The 219-residue stretch at 5–223 (KPHLNLITIG…DAFKVPEKPI (219 aa)) folds into the tr-type G domain. Residues 14–21 (GHVDHGKS) are G1. 14-21 (GHVDHGKS) contributes to the GTP binding site. A Mg(2+)-binding site is contributed by S21. The tract at residues 70-74 (GVTID) is G2. The G3 stretch occupies residues 91–94 (DAPG). Residues 91–95 (DAPGH) and 148–151 (NKMD) each bind GTP. Positions 148-151 (NKMD) are G4. Residues 187-189 (SGY) are G5.

It belongs to the TRAFAC class translation factor GTPase superfamily. Classic translation factor GTPase family. EF-Tu/EF-1A subfamily.

The protein resides in the cytoplasm. The enzyme catalyses GTP + H2O = GDP + phosphate + H(+). Its function is as follows. GTP hydrolase that promotes the GTP-dependent binding of aminoacyl-tRNA to the A-site of ribosomes during protein biosynthesis. This is Elongation factor 1-alpha from Thermoplasma acidophilum (strain ATCC 25905 / DSM 1728 / JCM 9062 / NBRC 15155 / AMRC-C165).